The sequence spans 401 residues: Enoyl-[acyl-carrier-protein] reductase [NADH] (401 aa).

Residues 48 to 53, 74 to 75, 111 to 112, and 140 to 141 each bind NAD(+); these read GASSGY, FE, DA, and LA. A substrate-binding site is contributed by Tyr226. Catalysis depends on Tyr236, which acts as the Proton donor. Residues Lys245 and 274-276 contribute to the NAD(+) site; that span reads VVT.

This sequence belongs to the TER reductase family. Monomer.

The enzyme catalyses a 2,3-saturated acyl-[ACP] + NAD(+) = a (2E)-enoyl-[ACP] + NADH + H(+). It participates in lipid metabolism; fatty acid biosynthesis. Functionally, involved in the final reduction of the elongation cycle of fatty acid synthesis (FAS II). Catalyzes the reduction of a carbon-carbon double bond in an enoyl moiety that is covalently linked to an acyl carrier protein (ACP). The polypeptide is Enoyl-[acyl-carrier-protein] reductase [NADH] (Xylella fastidiosa (strain 9a5c)).